The chain runs to 337 residues: Phosphate acyltransferase (337 aa).

The protein belongs to the PlsX family. Homodimer. Probably interacts with PlsY.

The protein resides in the cytoplasm. It carries out the reaction a fatty acyl-[ACP] + phosphate = an acyl phosphate + holo-[ACP]. The protein operates within lipid metabolism; phospholipid metabolism. In terms of biological role, catalyzes the reversible formation of acyl-phosphate (acyl-PO(4)) from acyl-[acyl-carrier-protein] (acyl-ACP). This enzyme utilizes acyl-ACP as fatty acyl donor, but not acyl-CoA. This is Phosphate acyltransferase from Polynucleobacter asymbioticus (strain DSM 18221 / CIP 109841 / QLW-P1DMWA-1) (Polynucleobacter necessarius subsp. asymbioticus).